We begin with the raw amino-acid sequence, 263 residues long: MNRINQLFDSNPRDLLSIYFCAGYPTLEGTTEVIRTLEKHGVNMIEIGIPFSDPMADGMVIQNAATQALRNGMSLRLLFEQLHDIRRDVKIPLILMGYLNPIMQFGFDNFCRQCAECGIDGVIIPDLPFKDYQEHFRTIAERYDVKVIMLITPETSEERVREIDEHTDGFIYMVSSAATTGAQQDFDGQKRAYFKKIEKMNLRNPRMVGFGISNEATFRAACENASGAIIGSRFVTLLHEEKNPEKAITRLKAILNLSSNDLR.

Residues glutamate 46 and aspartate 57 each act as proton acceptor in the active site.

This sequence belongs to the TrpA family. Tetramer of two alpha and two beta chains.

The enzyme catalyses (1S,2R)-1-C-(indol-3-yl)glycerol 3-phosphate + L-serine = D-glyceraldehyde 3-phosphate + L-tryptophan + H2O. It functions in the pathway amino-acid biosynthesis; L-tryptophan biosynthesis; L-tryptophan from chorismate: step 5/5. In terms of biological role, the alpha subunit is responsible for the aldol cleavage of indoleglycerol phosphate to indole and glyceraldehyde 3-phosphate. This chain is Tryptophan synthase alpha chain, found in Bacteroides fragilis (strain ATCC 25285 / DSM 2151 / CCUG 4856 / JCM 11019 / LMG 10263 / NCTC 9343 / Onslow / VPI 2553 / EN-2).